A 1078-amino-acid polypeptide reads, in one-letter code: DNA gyrase subunit B (1078 aa).

The Toprim domain maps to 889–974 (GKILNIEKTD…QGYIYIACPP (86 aa)). Mg(2+) contacts are provided by E895, D939, and D941.

It belongs to the type II topoisomerase GyrB family. Heterotetramer, composed of two GyrA and two GyrB chains. In the heterotetramer, GyrA contains the active site tyrosine that forms a transient covalent intermediate with DNA, while GyrB binds cofactors and catalyzes ATP hydrolysis. It depends on Mg(2+) as a cofactor. Post-translationally, this protein undergoes a protein self splicing that involves a post-translational excision of the intervening region (intein) followed by peptide ligation.

The protein localises to the cytoplasm. It carries out the reaction ATP-dependent breakage, passage and rejoining of double-stranded DNA.. Functionally, a type II topoisomerase that negatively supercoils closed circular double-stranded (ds) DNA in an ATP-dependent manner to modulate DNA topology and maintain chromosomes in an underwound state. Negative supercoiling favors strand separation, and DNA replication, transcription, recombination and repair, all of which involve strand separation. Also able to catalyze the interconversion of other topological isomers of dsDNA rings, including catenanes and knotted rings. Type II topoisomerases break and join 2 DNA strands simultaneously in an ATP-dependent manner. This chain is DNA gyrase subunit B (gyrB), found in Synechocystis sp. (strain ATCC 27184 / PCC 6803 / Kazusa).